The following is a 1039-amino-acid chain: Pleckstrin homology domain-containing family G member 5 (1039 aa).

2 disordered regions span residues 58–105 (NVST…RRHT) and 185–277 (PGDE…SSES). Composition is skewed to basic and acidic residues over residues 185 to 199 (PGDE…KDSK) and 217 to 228 (ERVDPQSRRESS). Over residues 259-277 (SSCSLPVGSSVGSSGSSES) the composition is skewed to low complexity. In terms of domain architecture, DH spans 372–564 (HQQEAVWELL…ERFIHHVNTC (193 aa)). Positions 620–720 (QLLLEGSLRM…WVDTLYNAQN (101 aa)) constitute a PH domain. Disordered regions lie at residues 739–785 (QHLQ…ASDG) and 800–836 (TLSS…LLPL). The span at 744-757 (LEEEEDEQEEEGEE) shows a compositional bias: acidic residues. Polar residues-rich tracts occupy residues 758–776 (SGTS…SNSL) and 811–831 (FSSQ…TPTS). T760 bears the Phosphothreonine mark. S765 carries the post-translational modification Phosphoserine. T876 carries the post-translational modification Phosphothreonine. Phosphoserine is present on residues S878, S903, and S908. The tract at residues 967 to 989 (PLSESENRPSHKAGGPADSARRK) is disordered.

In terms of assembly, interacts with GIPC1/synectin and RHOA. As to expression, selectively expressed in cortical and hippocampal neurons with prominent expression in the cell bodies and dendrites. Weakly expressed in rat fad pad ECs (RFPECs).

The protein localises to the cytoplasm. It localises to the perinuclear region. The protein resides in the cell membrane. It is found in the cell junction. Its subcellular location is the cell projection. The protein localises to the lamellipodium. In terms of biological role, functions as a guanine exchange factor (GEF) for RAB26 and thus regulates autophagy of synaptic vesicles in axon terminal of motoneurons. Involved in the control of neuronal cell differentiation. Plays a role in angiogenesis through regulation of endothelial cells chemotaxis. Also affects the migration, adhesion, and matrix/bone degradation in macrophages and osteoclasts. The polypeptide is Pleckstrin homology domain-containing family G member 5 (Plekhg5) (Rattus norvegicus (Rat)).